The primary structure comprises 1923 residues: Endoribonuclease Dicer (1923 aa).

The Helicase ATP-binding domain maps to 51–227 (LLEAALDHNT…ELEEKIQKLE (177 aa)). Residue 64 to 71 (LNTGSGKT) coordinates ATP. Positions 175 to 178 (DECH) match the DECH box motif. The segment at 256 to 595 (DCGPFTDRSG…LRNKCSKSVD (340 aa)) is required for interaction with PRKRA and TARBP2. Residues 410–433 (VSWSDSEDDEEDEEIEEKEKPETN) form a disordered region. A phosphoserine mark is found at serine 413 and serine 415. A compositionally biased stretch (acidic residues) spans 414-425 (DSEDDEEDEEIE). The Helicase C-terminal domain maps to 433–602 (NFPSPFTNIL…SVDTGEADTE (170 aa)). The Dicer dsRNA-binding fold domain maps to 629 to 721 (AIGHVNRYCA…MPVGKETVKY (93 aa)). A PAZ domain is found at 894–1041 (KFMEDIEKSE…LVPELCAIHP (148 aa)). 2 positions are modified to phosphoserine: serine 1015 and serine 1160. Composition is skewed to polar residues over residues 1246 to 1255 (NANTSTSDGS) and 1277 to 1290 (SEQS…SRTL). The disordered stretch occupies residues 1246–1291 (NANTSTSDGSPVTAAVPGTTETGEAPPDRTASEQSPSPGYSSRTLG). Residues 1276 to 1404 (ASEQSPSPGY…TEKWEKDEMT (129 aa)) enclose the RNase III 1 domain. Mg(2+)-binding residues include glutamate 1316, glutamate 1396, and glutamate 1399. Phosphoserine occurs at positions 1461, 1469, and 1471. The 159-residue stretch at 1667–1825 (FENFEKKINY…LAGAIYMDSG (159 aa)) folds into the RNase III 2 domain. 3 residues coordinate Mg(2+): glutamate 1706, aspartate 1811, and glutamate 1814. Positions 1853-1915 (SPVRELLEME…ARRALRSLKA (63 aa)) constitute a DRBM domain. Phosphoserine is present on serine 1869.

The protein belongs to the helicase family. Dicer subfamily. Component of the RISC loading complex (RLC), or micro-RNA (miRNA) loading complex (miRLC), which is composed of DICER1, AGO2 and TARBP2; DICER1 and TARBP2 are required to process precursor miRNAs (pre-miRNAs) to mature miRNAs and then load them onto AGO2. Note that the trimeric RLC/miRLC is also referred to as RISC. Interacts with DHX9, AGO1, PIWIL1 and PRKRA. Interacts with AGO2, TARBP2, EIF6, MOV10 and RPL7A (60S ribosome subunit); they form a large RNA-induced silencing complex (RISC). Interacts with BCDIN3D. Interacts (via Dicer dsRNA-binding fold domain) with ALOX5 (via PLAT domain); this interaction enhances arachidonate 5-lipoxygenase activity and modifies the miRNA precursor processing activity of DICER1. It depends on Mg(2+) as a cofactor. Mn(2+) is required as a cofactor.

The protein localises to the cytoplasm. It catalyses the reaction Endonucleolytic cleavage to 5'-phosphomonoester.. Functionally, double-stranded RNA (dsRNA) endoribonuclease playing a central role in short dsRNA-mediated post-transcriptional gene silencing. Cleaves naturally occurring long dsRNAs and short hairpin pre-microRNAs (miRNA) into fragments of twenty-one to twenty-three nucleotides with 3' overhang of two nucleotides, producing respectively short interfering RNAs (siRNA) and mature microRNAs. SiRNAs and miRNAs serve as guide to direct the RNA-induced silencing complex (RISC) to complementary RNAs to degrade them or prevent their translation. Gene silencing mediated by siRNAs, also called RNA interference, controls the elimination of transcripts from mobile and repetitive DNA elements of the genome but also the degradation of exogenous RNA of viral origin for instance. The miRNA pathway on the other side is a mean to specifically regulate the expression of target genes. The sequence is that of Endoribonuclease Dicer (DICER1) from Bos taurus (Bovine).